The sequence spans 305 residues: Tetraacyldisaccharide 4'-kinase (305 aa).

Residue 39-46 (SVGGNGKT) participates in ATP binding.

Belongs to the LpxK family.

The catalysed reaction is a lipid A disaccharide + ATP = a lipid IVA + ADP + H(+). The protein operates within glycolipid biosynthesis; lipid IV(A) biosynthesis; lipid IV(A) from (3R)-3-hydroxytetradecanoyl-[acyl-carrier-protein] and UDP-N-acetyl-alpha-D-glucosamine: step 6/6. Functionally, transfers the gamma-phosphate of ATP to the 4'-position of a tetraacyldisaccharide 1-phosphate intermediate (termed DS-1-P) to form tetraacyldisaccharide 1,4'-bis-phosphate (lipid IVA). This is Tetraacyldisaccharide 4'-kinase from Pseudoalteromonas atlantica (strain T6c / ATCC BAA-1087).